Consider the following 126-residue polypeptide: Large ribosomal subunit protein eL14 (126 aa).

This sequence belongs to the eukaryotic ribosomal protein eL14 family.

In Tetrahymena thermophila (strain SB210), this protein is Large ribosomal subunit protein eL14 (RPL14).